The primary structure comprises 404 residues: Interferon-activable protein 205-A (404 aa).

Residues 1-88 form the Pyrin domain; sequence MENEYKRLVL…AEILKKERSE (88 aa). Residues 85-198 form a disordered region; that stretch reads ERSEVTEETS…KSQPQNQNIP (114 aa). 2 stretches are compositionally biased toward low complexity: residues 102–112 and 122–132; these read ASPATPTSTTS and TSTTQEETSTA. Residues 137–147 show a composition bias toward basic and acidic residues; sequence GMSEEKTDVKK. The segment covering 168–185 has biased composition (low complexity); that stretch reads QSPISQVSSSASSNIPSA. A compositionally biased stretch (polar residues) spans 186–197; that stretch reads KNQKSQPQNQNI. In terms of domain architecture, HIN-200 spans 192 to 392; the sequence is PQNQNIPRGA…CGDHSFVKVT (201 aa).

Belongs to the HIN-200 family.

It is found in the nucleus. May act as a transcriptional regulator in the myeloid lineage. Inhibits cell growth via p53/TP53 and RB1-dependent and independent pathways. This chain is Interferon-activable protein 205-A (Ifi205a), found in Mus musculus (Mouse).